The sequence spans 149 residues: Down syndrome critical region protein 9 (149 aa).

The interval 1–41 is disordered; the sequence is MGRICPVNSRARRLRARPGRPSGDSLPYHQLQGGAPRLWSP.

Testis specific.

The polypeptide is Down syndrome critical region protein 9 (DSCR9) (Homo sapiens (Human)).